The chain runs to 130 residues: TPVGFIGLGNMGNPMAKADRIITMLPSSMNSIEVYSGANGILKEVEKMGAVFMDAPVSGGVGAARICNNMLLAISMIGTAEAMNLGIRDLGLAQDSATSTKTPILLGSVAHQIYRDFSSVFQYLREEETF.

NAD(+)-binding positions include 1-17, 25-26, and N30; these read TPVG…PMAK and LP. K43 bears the N6-acetyllysine mark. An N6-acetyllysine; alternate modification is found at K47. Residue K47 is modified to N6-succinyllysine; alternate. The residue at position 101 (K101) is an N6-succinyllysine.

It belongs to the HIBADH-related family. 3-hydroxyisobutyrate dehydrogenase subfamily. In terms of assembly, homodimer.

The protein localises to the mitochondrion. It carries out the reaction 3-hydroxy-2-methylpropanoate + NAD(+) = 2-methyl-3-oxopropanoate + NADH + H(+). It participates in amino-acid degradation; L-valine degradation. The chain is 3-hydroxyisobutyrate dehydrogenase, mitochondrial from Mesocricetus auratus (Golden hamster).